The following is a 367-amino-acid chain: Probable cysteine protease RD19D (367 aa).

The signal sequence occupies residues M1–S22. Residues V23–G136 constitute a propeptide, activation peptide. A glycan (N-linked (GlcNAc...) asparagine) is linked at N61. 2 cysteine pairs are disulfide-bonded: C158/C208 and C192/C241. C161 is an active-site residue. Residue N254 is glycosylated (N-linked (GlcNAc...) asparagine). A disulfide bond links C297 and C352. Residues H304 and N331 contribute to the active site.

It belongs to the peptidase C1 family.

Functionally, probable thiol protease. The protein is Probable cysteine protease RD19D of Arabidopsis thaliana (Mouse-ear cress).